The primary structure comprises 135 residues: Large ribosomal subunit protein uL16c (135 aa).

The protein belongs to the universal ribosomal protein uL16 family. Part of the 50S ribosomal subunit.

The protein resides in the plastid. Its subcellular location is the chloroplast. The sequence is that of Large ribosomal subunit protein uL16c from Acorus calamus var. americanus (American sweet flag).